Here is a 346-residue protein sequence, read N- to C-terminus: Bifunctional phosphatase IMPL2, chloroplastic (346 aa).

The transit peptide at 1–61 (MLAQSHFFSK…VSRRRFCLTM (61 aa)) directs the protein to the chloroplast. Residues E147, D165, and D168 each contribute to the Mg(2+) site. A substrate-binding site is contributed by E147. Substrate-binding positions include 167-170 (IDGT), 263-265 (GCD), E282, and D289. Residue D289 participates in Mg(2+) binding.

It belongs to the inositol monophosphatase superfamily. It depends on Mg(2+) as a cofactor. As to expression, ubiquitous. High expression in roots. Expressed in pistil and seed endosperm.

The protein localises to the plastid. Its subcellular location is the chloroplast. It carries out the reaction a myo-inositol phosphate + H2O = myo-inositol + phosphate. The enzyme catalyses L-histidinol phosphate + H2O = L-histidinol + phosphate. The catalysed reaction is beta-L-galactose 1-phosphate + H2O = L-galactose + phosphate. It functions in the pathway amino-acid biosynthesis; L-histidine biosynthesis; L-histidine from 5-phospho-alpha-D-ribose 1-diphosphate: step 8/9. Its pathway is polyol metabolism; myo-inositol biosynthesis; myo-inositol from D-glucose 6-phosphate: step 2/2. Its function is as follows. Phosphatase required for histidine production. Also acts on L-galactose 1-phosphate (L-Gal 1-P), D-myoinositol 3-phosphate (D-Ins 3-P) and D-myoinositol 1-phosphate (D-Ins 1-P). This chain is Bifunctional phosphatase IMPL2, chloroplastic (HISN7), found in Arabidopsis thaliana (Mouse-ear cress).